A 430-amino-acid chain; its full sequence is Enolase (430 aa).

A sufficient for secretion region spans residues 1–140 (MPYIVDVYAR…YQYLGGFNSK (140 aa)). Thr-141 carries the phosphothreonine modification. A (2R)-2-phosphoglycerate-binding site is contributed by Gln-163. Residue Glu-205 is the Proton donor of the active site. Asp-242 contacts Mg(2+). The residue at position 259 (Ser-259) is a Phosphoserine. A Phosphotyrosine modification is found at Tyr-281. Mg(2+) is bound by residues Glu-287 and Asp-314. The residue at position 325 (Ser-325) is a Phosphoserine. 4 residues coordinate (2R)-2-phosphoglycerate: Lys-339, Arg-368, Ser-369, and Lys-390. Lys-339 functions as the Proton acceptor in the catalytic mechanism.

This sequence belongs to the enolase family. As to quaternary structure, homooctamer. Component of the RNA degradosome complex composed of rny, rnjA, rnjB, pnp, pfkA and eno (although rnjA and rnjB's presence is controversial). The cofactor is Mg(2+). Phosphorylated during sporulation.

It is found in the cytoplasm. It localises to the secreted. Its subcellular location is the cell surface. The catalysed reaction is (2R)-2-phosphoglycerate = phosphoenolpyruvate + H2O. The protein operates within carbohydrate degradation; glycolysis; pyruvate from D-glyceraldehyde 3-phosphate: step 4/5. With respect to regulation, covalent binding to the substrate (probably 2-PG) at Lys-339 of a small fraction of enolase causes inactivation of the enzyme, and possibly serves as a signal for the export of the protein. Citrate acts as a non-competitive inhibitor for both forward and reverse reactions, probably by chelating Mg(2+). Catalyzes the reversible conversion of 2-phosphoglycerate (2-PG) into phosphoenolpyruvate (PEP). It is essential for the degradation of carbohydrates via glycolysis. In terms of biological role, a component of the RNA degradosome, a multi-enzyme complex involved in RNA processing and messenger RNA degradation. The chain is Enolase from Bacillus subtilis (strain 168).